Here is a 263-residue protein sequence, read N- to C-terminus: Protein phosphatase type 2A regulatory subunit RTS3 (263 aa).

Disordered regions lie at residues 1-62 and 149-176; these read MIAT…AQRR and LPLT…ISNG. Low complexity predominate over residues 46 to 61; it reads LSTSSSPSSSPMSAQR. Phosphoserine is present on residues Ser-172, Ser-192, Ser-214, and Ser-238.

It is found in the cytoplasm. The protein resides in the nucleus. Its function is as follows. May be a component of a protein phosphatase type 2A (PP2A) complex. Negatively regulates SIT4 phosphatase, a modulators of caffeine sensitivity. The polypeptide is Protein phosphatase type 2A regulatory subunit RTS3 (RTS3) (Saccharomyces cerevisiae (strain ATCC 204508 / S288c) (Baker's yeast)).